The chain runs to 547 residues: ATP synthase subunit alpha (547 aa).

172–179 (GDRKTGKT) is an ATP binding site.

Belongs to the ATPase alpha/beta chains family. F-type ATPases have 2 components, CF(1) - the catalytic core - and CF(0) - the membrane proton channel. CF(1) has five subunits: alpha(3), beta(3), gamma(1), delta(1), epsilon(1). CF(0) has three main subunits: a(1), b(2) and c(9-12). The alpha and beta chains form an alternating ring which encloses part of the gamma chain. CF(1) is attached to CF(0) by a central stalk formed by the gamma and epsilon chains, while a peripheral stalk is formed by the delta and b chains.

It localises to the cell membrane. It carries out the reaction ATP + H2O + 4 H(+)(in) = ADP + phosphate + 5 H(+)(out). Its function is as follows. Produces ATP from ADP in the presence of a proton gradient across the membrane. The alpha chain is a regulatory subunit. The chain is ATP synthase subunit alpha from Rhodococcus opacus (strain B4).